A 54-amino-acid chain; its full sequence is Hydrophobic protein RCI2A (54 aa).

2 helical membrane passes run 2-22 (STAT…GVFL) and 32-52 (ICLV…IYVL).

This sequence belongs to the UPF0057 (PMP3) family.

It is found in the membrane. This is Hydrophobic protein RCI2A (RCI2A) from Arabidopsis thaliana (Mouse-ear cress).